The chain runs to 1942 residues: MGNSYAGQLKSARFEEALHNSIEASLRSSGGDPQPVFTQLYLEPDQYSGHVEDIKPKMDLSLRSDPSTHVLVKCHSSNSVEDMDDEDDSDTSSPPLPYLQGPPPDGCCTVDGFCQAGKDLRLVSMATESIEVPAGFELVGAKSPSIPEHILVCAVDKRFLPDENGKNALLGFSGNCVGCGEKGFRYFTEFSNHINLKLSTQPKKQKHLKYYLVKNSQGALCKGALICWKDCKTRPFSNSASSSKPSSSSSLSSKENGDTNGHSPSPFPLSDSPPARMQSGSSSGIFGPQELGFLKPLNTPTHGTKTLPIVPTALRVNGLTNGLSMDGRSTLLSPPRTNPLSTPSHGYRTTETGDSPASTAMSTGPPKKRHRSWHPTTLVPIPATAVPVPAIRPLTCSSGPLLSLSNQQPASVSGVIQPQPITAGETVIIPDNLLNSYGVRPVLLIGQGTLPYFFGNVGDLVVSPLLVSCYKGRELNEKTLASLGMSANQLLTTETMILLTLQYLARLGTEQIPLREEFEQIMLKAMLCGPTGPPVSPAQLPWLARMEASVSGGSVQVLVTHGSLGEGISESLRSLSETSPQQQQCLPNYVLIICTSKSGANEFCVLVLGKYQSRALAESMLSTNEFLKEISYELITGKVSVLASHFQSTSLGDNMDKQLVRYQRKRKDRVVQPFQGHLTEYIHSQEAATMIPESGPDLLSDDFQIHPPQLSVARSLLSQVCAIADSGSQSLDLGRFCKVDFLILVPPSHVLVHQTVQRIRQSGVLIDLGIEDVSLAMQKSDKYVVRLDTEVHTKMEAFMRKVKQNPYTLFVLIHDNSHVDLTSALSGSVCHGELQGLADRVVNCPEVLEAINLLVLQVSCFPFTLQSRQSRISTQNEVHWPDTENQQGEASPKDLIYFGLKDYSKSLQWGVASPILRCDDAFERMVKTLLERHPHLHSMVIRSYLLIQQYTEALMALTAAPSLRDHVTPQTLAMVEDLLSVPGRSKHGCGHMLLVRVPSLQLARLAQERLEEARDKLGLQYRFAVLLGSPAAEISLPVHFCARLRAWRGCKNEEWVPHTYEDLEGLPCIVILTGKDPLGETFPRSLKYCDLRLIDSSYLTRTALEQEVGLACSYVTRRVIPKTKTATSREERPREGERSSGETAEHDDLPMELERPPSNASAATRTSGSTTENGVSSSSILDKPSSQSDPCGSRTMMDSCSSPVRFKQECDSQAPSSSSTSSFSSASSSSSSSSSPAAQRPSQSTQAPRECNRTQVFPRTAVLSRAAYTLLAPETLGHPSSASLLPHADVSWSSPLRPPVPHGLGGAEQSLYYRQWTTARQHHADYEGPVPHPHPRRLLLSGPPQVGKTGAYLQFLRILFRMLIRLLEVDVYDEEELEEDVQDKSKVPPSSGPQWPDVEDVRKLRFDLCPHDCKFKYSSPVYANRMPKTQSGVKTERLDTEADPPKRNTVSVRLSLFAAHNAFHHCEQCHHYSEPIPAAQLSDCTFHAFTFCSSMLGEEVQLHFIIPKSKESHFVFSQQGSHLESMRLPLLSDKESGMMKSPIFTPTTGRQEHGLLNIYHAMEGAEHLHILVVKQYEMPLYRKYWPNHILLVLPAMFNNSGVGAARFMIKELSYHNLELERNRQEEQGVKRQDVWPFIVMMDDSCVLWNAQQPGPDGKTEVMNVSLKSVLQHMEATPKISQYAVCGLRKWSSSLSSQAPTSPFSRCHLHDLILLNVDLTQNVQYDLNRFTCEEVDFNLRANSSGLLLCRFNQFSIMKKHIPIGGHKDFLIKPKLMRIETPVRVCASQYVCAPDSEQTLLAAPAQFLLEKFLQSCSHRLFPLALSNSANPVLSIDSYLNLGPEVQVCYVSSRPHSVNVDHQGVIFSGLLLYLCDSFVVSSLLKKFNFLKGATLCVICQDRSSLRQTIVRLELEDEWQFRLRDEFQTANCSEDRPLYFLTGRHI.

4 disordered regions span residues 76-101 (SSNS…YLQG), 235-306 (PFSN…GTKT), 325-373 (MDGR…HRSW), and 1123-1256 (TKTA…RTQV). Positions 81–90 (EDMDDEDDSD) are enriched in acidic residues. Over residues 237–253 (SNSASSSKPSSSSSLSS) the composition is skewed to low complexity. Residues 338–362 (NPLSTPSHGYRTTETGDSPASTAMS) are compositionally biased toward polar residues. Residues 1127–1155 (TSREERPREGERSSGETAEHDDLPMELER) are compositionally biased toward basic and acidic residues. Over residues 1158-1171 (SNASAATRTSGSTT) the composition is skewed to low complexity. The span at 1172–1202 (ENGVSSSSILDKPSSQSDPCGSRTMMDSCSS) shows a compositional bias: polar residues. The segment covering 1212 to 1248 (SQAPSSSSTSSFSSASSSSSSSSSPAAQRPSQSTQAP) has biased composition (low complexity). The chain crosses the membrane as a helical span at residues 1861-1881 (GVIFSGLLLYLCDSFVVSSLL).

Belongs to the GREB1 family.

It is found in the membrane. Functionally, plays a major role in early metanephros development. The polypeptide is GREB1-like protein (greb1l) (Danio rerio (Zebrafish)).